Here is a 281-residue protein sequence, read N- to C-terminus: tRNA N(3)-cytidine methyltransferase METTL8, mitochondrial (281 aa).

The transit peptide at 1 to 22 (MNVIWRSCICRLRQGKVPHRCQ) directs the protein to the mitochondrion. A Glycyl lysine isopeptide (Lys-Gly) (interchain with G-Cter in SUMO) cross-link involves residue Lys80. S-adenosyl-L-methionine contacts are provided by Trp89 and Tyr93. Polar residues predominate over residues 139–151 (RTQGTETHCQESF). The tract at residues 139-180 (RTQGTETHCQESFVSPEPGSRGRSAPDPDLEEYSKGPGKTEP) is disordered. Positions 194, 220, and 246 each coordinate S-adenosyl-L-methionine.

The protein belongs to the methyltransferase superfamily. METL family. Interacts with EP300. As to expression, absent in embryonic lung but is induced in a fibroblast cell line by stretch. In terms of tissue distribution, expressed in undifferentiated progenitor cells, while its expression is inhibited by stretch. Absent in undifferentiated embryonic lung mesenchymal cells, but expression is induced by stretch. As to expression, expressed in mature adipose tissue.

The protein localises to the mitochondrion. It is found in the cytoplasm. The protein resides in the nucleus. It catalyses the reaction cytidine(32) in tRNA(Ser) + S-adenosyl-L-methionine = N(3)-methylcytidine(32) in tRNA(Ser) + S-adenosyl-L-homocysteine + H(+). It carries out the reaction cytidine(32) in tRNA(Thr) + S-adenosyl-L-methionine = N(3)-methylcytidine(32) in tRNA(Thr) + S-adenosyl-L-homocysteine + H(+). The enzyme catalyses a cytidine in mRNA + S-adenosyl-L-methionine = an N(3)-methylcytidine in mRNA + S-adenosyl-L-homocysteine + H(+). Mitochondrial S-adenosyl-L-methionine-dependent methyltransferase that mediates N(3)-methylcytidine modification of residue 32 of the tRNA anticodon loop of mitochondrial tRNA(Ser)(UCN) and tRNA(Thr). N(3)-methylcytidine methylation modification regulates mitochondrial translation efficiency and is required for activity of the respiratory chain. N(3)-methylcytidine methylation of mitochondrial tRNA(Ser)(UCN) requires the formation of N(6)-dimethylallyladenosine(37) (i6A37) by TRIT1 as prerequisite. May also mediate N(3)-methylcytidine modification of mRNAs. The existence of N(3)-methylcytidine modification on mRNAs is however unclear, and additional evidences are required to confirm the role of the N(3)-methylcytidine-specific mRNA methyltransferase activity of METTL8 in vivo. In terms of biological role, overexpression in lung progenitor cells stimulates smooth muscle-specific gene expression and suppresses adipogenic gene expression. Its function is as follows. Stimulates adipogenesis. This is tRNA N(3)-cytidine methyltransferase METTL8, mitochondrial from Mus musculus (Mouse).